Consider the following 198-residue polypeptide: Thymidine kinase (198 aa).

ATP is bound by residues 9–16 (STMNAGKS) and 87–90 (DEAQ). Catalysis depends on glutamate 88, which acts as the Proton acceptor. Zn(2+) is bound by residues cysteine 145, cysteine 147, cysteine 182, and histidine 185.

This sequence belongs to the thymidine kinase family. Homotetramer.

The protein resides in the cytoplasm. The catalysed reaction is thymidine + ATP = dTMP + ADP + H(+). This Ruegeria pomeroyi (strain ATCC 700808 / DSM 15171 / DSS-3) (Silicibacter pomeroyi) protein is Thymidine kinase.